A 396-amino-acid polypeptide reads, in one-letter code: Bone morphogenetic protein 2 (396 aa).

Residues 1-23 (MVAGTRCLLALLLPQVLLGGAAG) form the signal peptide. A propeptide spans 24-282 (LIPELGRRKF…GHPLHRREKR (259 aa)) (cleaved by PCSK5). Ser-87 carries the post-translational modification Phosphoserine. N-linked (GlcNAc...) asparagine glycosylation is found at Asn-135, Asn-163, Asn-164, and Asn-200. The disordered stretch occupies residues 272 to 293 (KGHPLHRREKRQAKHKQRKRLK). Residues 274-293 (HPLHRREKRQAKHKQRKRLK) are compositionally biased toward basic residues. Disulfide bonds link Cys-296/Cys-361, Cys-325/Cys-393, and Cys-329/Cys-395. Asn-338 carries an N-linked (GlcNAc...) asparagine glycan.

This sequence belongs to the TGF-beta family. Homodimer; disulfide-linked. Interacts with SOSTDC1. Interacts with GREM2, RGMA, RGMB and RGMC. Interacts with ASPN. Interacts with MAFP5. Interacts with FBN1 (via N-terminal domain) and FBN2. Interacts with type I receptor BMPR1A. Interacts with type II receptor BMPR2. Interacts with ERFE. Interacts with BMPR1A/ALK3; the interaction may induce HAMP expression. Interacts with TGFBR3.

Its subcellular location is the secreted. Its function is as follows. Growth factor of the TGF-beta superfamily that plays essential roles in many developmental processes, including cardiogenesis, neurogenesis, and osteogenesis. Induces cartilage and bone formation. Initiates the canonical BMP signaling cascade by associating with type I receptor BMPR1A and type II receptor BMPR2. Once all three components are bound together in a complex at the cell surface, BMPR2 phosphorylates and activates BMPR1A. In turn, BMPR1A propagates signal by phosphorylating SMAD1/5/8 that travel to the nucleus and act as activators and repressors of transcription of target genes. Also acts to promote expression of HAMP, via the interaction with its receptor BMPR1A/ALK3. Can also signal through non-canonical pathways such as ERK/MAP kinase signaling cascade that regulates osteoblast differentiation. Also stimulates the differentiation of myoblasts into osteoblasts via the EIF2AK3-EIF2A-ATF4 pathway by stimulating EIF2A phosphorylation which leads to increased expression of ATF4 which plays a central role in osteoblast differentiation. Acts as a positive regulator of odontoblast differentiation during mesenchymal tooth germ formation, expression is repressed during the bell stage by MSX1-mediated inhibition of CTNNB1 signaling. The polypeptide is Bone morphogenetic protein 2 (BMP2) (Dama dama (Fallow deer)).